A 176-amino-acid polypeptide reads, in one-letter code: Peptide methionine sulfoxide reductase MsrA (176 aa).

The active site involves cysteine 10.

Belongs to the MsrA Met sulfoxide reductase family.

It carries out the reaction L-methionyl-[protein] + [thioredoxin]-disulfide + H2O = L-methionyl-(S)-S-oxide-[protein] + [thioredoxin]-dithiol. The catalysed reaction is [thioredoxin]-disulfide + L-methionine + H2O = L-methionine (S)-S-oxide + [thioredoxin]-dithiol. Its function is as follows. Has an important function as a repair enzyme for proteins that have been inactivated by oxidation. Catalyzes the reversible oxidation-reduction of methionine sulfoxide in proteins to methionine. The protein is Peptide methionine sulfoxide reductase MsrA of Leptospira borgpetersenii serovar Hardjo-bovis (strain JB197).